A 740-amino-acid chain; its full sequence is Ion-translocating oxidoreductase complex subunit C (740 aa).

4Fe-4S ferredoxin-type domains lie at G369–Y397 and K407–F436. [4Fe-4S] cluster-binding residues include C377, C380, C383, C387, C416, C419, C422, and C426. The tract at residues A598–K716 is disordered.

This sequence belongs to the 4Fe4S bacterial-type ferredoxin family. RnfC subfamily. As to quaternary structure, the complex is composed of six subunits: RsxA, RsxB, RsxC, RsxD, RsxE and RsxG. Requires [4Fe-4S] cluster as cofactor.

It localises to the cell inner membrane. Its function is as follows. Part of a membrane-bound complex that couples electron transfer with translocation of ions across the membrane. Required to maintain the reduced state of SoxR. The sequence is that of Ion-translocating oxidoreductase complex subunit C from Shigella flexneri serotype 5b (strain 8401).